We begin with the raw amino-acid sequence, 165 residues long: Fibrinogen-binding protein (165 aa).

Positions M1–A29 are cleaved as a signal peptide.

Interacts with host fibrinogen alpha chain/FGA. Interacts with host complement protein C3.

It localises to the secreted. Its function is as follows. Extracellular fibrinogen-binding protein that plays an important role in virulence. By interacting with the alpha chain of fibrinogen and its derivative fibrin, enhances a non-functional interaction between fibrinogen and platelets and is responsible for repression of fibrinogen-dependent platelet aggregation. In addition, assembles a fibrinogen protective shield around the bacteria which results in impaired phagocytic clearance by the host. Mechanistically, interacts with host complement C3b deposited on the surface of the bacterium via its C-terminal and then recruits fibrinogen via its N-terminal. This chain is Fibrinogen-binding protein (fib), found in Staphylococcus aureus (strain MRSA252).